The sequence spans 523 residues: Factor arrest protein 8 (523 aa).

The stretch at 26 to 76 forms a coiled coil; it reads TKNERDRITWELERSEMKARIAELEGENRDLKHQLNQIQSKAVSPEGEKEE. The interval 61 to 80 is disordered; the sequence is NQIQSKAVSPEGEKEEKHVP. The segment covering 71–80 has biased composition (basic and acidic residues); sequence EGEKEEKHVP. Ser-115 is subject to Phosphoserine. Position 132 is a phosphothreonine (Thr-132). The disordered stretch occupies residues 150–171; the sequence is ALLDTKPNPKQGPSESPSPTKV. Polar residues predominate over residues 160 to 171; the sequence is QGPSESPSPTKV.

Component of a complex at least composed of FAR3, FAR7, FAR8, FAR10, FAR11 and VPS64.

The protein localises to the cytoplasm. It is found in the endoplasmic reticulum. Functionally, participates in the control of the reentry into the cell cycle following pheromone treatment. This chain is Factor arrest protein 8 (FAR8), found in Saccharomyces cerevisiae (strain ATCC 204508 / S288c) (Baker's yeast).